The sequence spans 184 residues: NADH-quinone oxidoreductase subunit B (184 aa).

[4Fe-4S] cluster-binding residues include Cys37, Cys38, Cys103, and Cys132.

The protein belongs to the complex I 20 kDa subunit family. NDH-1 is composed of 14 different subunits. Subunits NuoB, C, D, E, F, and G constitute the peripheral sector of the complex. [4Fe-4S] cluster serves as cofactor.

It localises to the cell membrane. The catalysed reaction is a quinone + NADH + 5 H(+)(in) = a quinol + NAD(+) + 4 H(+)(out). Its function is as follows. NDH-1 shuttles electrons from NADH, via FMN and iron-sulfur (Fe-S) centers, to quinones in the respiratory chain. The immediate electron acceptor for the enzyme in this species is believed to be a menaquinone. Couples the redox reaction to proton translocation (for every two electrons transferred, four hydrogen ions are translocated across the cytoplasmic membrane), and thus conserves the redox energy in a proton gradient. The chain is NADH-quinone oxidoreductase subunit B from Mycobacterium sp. (strain JLS).